The primary structure comprises 430 residues: uncharacterized protein (430 aa).

This is an uncharacterized protein from Escherichia coli (strain K12).